A 129-amino-acid chain; its full sequence is Glycerol-3-phosphate cytidylyltransferase (129 aa).

CTP is bound by residues 9–10 and 14–17; these read TF and HYGH. Lys-44 contacts substrate. Lys-46 lines the CTP pocket. Residue Lys-77 coordinates substrate. Position 113 to 120 (113 to 120) interacts with CTP; sequence RTDGISTT.

This sequence belongs to the cytidylyltransferase family. As to quaternary structure, homodimer.

It is found in the cytoplasm. It catalyses the reaction sn-glycerol 3-phosphate + CTP + H(+) = CDP-glycerol + diphosphate. The protein operates within cell wall biogenesis; poly(ribitol phosphate) teichoic acid biosynthesis. Functionally, catalyzes the transfer of the cytidylyl group of CTP to sn-glycerol 3-phosphate so the activated glycerol 3-phosphate can be used for teichoic acid synthesis, via incorporation into both the linkage unit by TarB and TarF. The sequence is that of Glycerol-3-phosphate cytidylyltransferase (tarD) from Bacillus spizizenii (strain ATCC 23059 / NRRL B-14472 / W23) (Bacillus subtilis subsp. spizizenii).